Here is a 212-residue protein sequence, read N- to C-terminus: Pyrrolidone-carboxylate peptidase (212 aa).

Active-site residues include E80, C143, and H165.

The protein belongs to the peptidase C15 family. Homotetramer.

It is found in the cytoplasm. The enzyme catalyses Release of an N-terminal pyroglutamyl group from a polypeptide, the second amino acid generally not being Pro.. Removes 5-oxoproline from various penultimate amino acid residues except L-proline. The chain is Pyrrolidone-carboxylate peptidase from Vibrio campbellii (strain ATCC BAA-1116).